The chain runs to 666 residues: Probable potassium transport system protein Kup (666 aa).

The next 12 membrane-spanning stretches (helical) occupy residues 16–36, 58–78, 100–120, 141–161, 165–185, 221–241, 253–273, 292–312, 343–363, 373–393, 399–419, and 424–444; these read GFII…LYTM, ISLI…LIAL, PWLI…GALT, IYQN…VLFG, FGTG…FSFL, IFIL…YSDL, WPFV…WILA, LTVY…QALI, LYIP…VLYF, YGLA…YYLI, PFLA…FFWA, and FMHG…VMFI.

Belongs to the HAK/KUP transporter (TC 2.A.72) family.

It is found in the cell membrane. It catalyses the reaction K(+)(in) + H(+)(in) = K(+)(out) + H(+)(out). Transport of potassium into the cell. Likely operates as a K(+):H(+) symporter. This is Probable potassium transport system protein Kup from Streptococcus pyogenes serotype M18 (strain MGAS8232).